The primary structure comprises 201 residues: DNA polymerase epsilon subunit C (201 aa).

Disordered regions lie at residues 102–165 (KKRE…KSTR) and 178–201 (SALDVGEHSDSSDIEVDHTKSTDP). A compositionally biased stretch (acidic residues) spans 117 to 144 (VVIEEPELHEDDGVEEEEEEDEVSEEEE). Composition is skewed to basic and acidic residues over residues 145–164 (PVHNEELLDDSKDQQNDKST) and 182–201 (VGEHSDSSDIEVDHTKSTDP). 3 positions are modified to phosphoserine: Ser-186, Ser-188, and Ser-189.

As to quaternary structure, DNA polymerase epsilon is a heterotetramer consisting of POL2, DPB2, DPB3 and DPB4.

It localises to the nucleus. As accessory component of the DNA polymerase epsilon (DNA polymerase II) participates in chromosomal DNA replication. It is required during synthesis of the leading and lagging DNA strands at the replication fork and binds at/or near replication origins and moves along DNA with the replication fork. It has 3'-5' proofreading exonuclease activity that correct errors arising during DNA replication. It is also involved in DNA synthesis during DNA repair. This Saccharomyces cerevisiae (strain ATCC 204508 / S288c) (Baker's yeast) protein is DNA polymerase epsilon subunit C (DPB3).